Here is a 109-residue protein sequence, read N- to C-terminus: MLSVSRAATRMTGMVARFSAGGHGDGAGRGGGSGGSIRDAGGAFGKMEAAREDEYFYKKQKAQLQELREHIQEEVKHHEGQLENHKKVLERHQQRISEIEAQERALGKE.

Disordered regions lie at residues 18-39 and 73-109; these read FSAG…SIRD and EEVK…LGKE. The segment covering 21–35 has biased composition (gly residues); that stretch reads GGHGDGAGRGGGSGG. Residues 55–109 are a coiled coil; that stretch reads YFYKKQKAQLQELREHIQEEVKHHEGQLENHKKVLERHQQRISEIEAQERALGKE.

Belongs to the ATPase inhibitor family.

It is found in the mitochondrion. Thought to be a regulatory component of the ATP-synthesizing complex in the mitochondria. Activity is pH dependent. The chain is ATPase inhibitor mai-2, mitochondrial (mai-2) from Caenorhabditis elegans.